A 114-amino-acid chain; its full sequence is Gonadotropin subunit beta-1 (114 aa).

An N-terminal signal peptide occupies residues 1 to 19; it reads MQLVLMAAVLALAEVGCFG. 6 disulfides stabilise this stretch: Cys20-Cys66, Cys32-Cys80, Cys37-Cys114, Cys43-Cys92, Cys47-Cys94, and Cys97-Cys104. Asn24 carries an N-linked (GlcNAc...) asparagine glycan.

This sequence belongs to the glycoprotein hormones subunit beta family. As to quaternary structure, heterodimer of an alpha and a beta chain.

The protein resides in the secreted. Functionally, involved in gametogenesis and steroidogenesis. In Fundulus heteroclitus (Killifish), this protein is Gonadotropin subunit beta-1 (cgba).